A 415-amino-acid chain; its full sequence is Putative F-box/FBD/LRR-repeat protein At3g49040 (415 aa).

The F-box domain occupies 10-58 (EDRISELHEALLVHIMSSLPTKTVVATSVLSKRWRHVWKTVQNLKFVSK). 5 LRR repeats span residues 60 to 86 (HQTF…DLEF), 87 to 114 (SNQL…VLDL), 143 to 170 (TLTL…HLYK), 171 to 196 (VHFY…IVHR), and 213 to 241 (RLTI…NIRR). The FBD domain occupies 272 to 377 (ILESLTSAKR…TSLKKATFST (106 aa)).

This is Putative F-box/FBD/LRR-repeat protein At3g49040 from Arabidopsis thaliana (Mouse-ear cress).